A 78-amino-acid chain; its full sequence is Large ribosomal subunit protein bL28 (78 aa).

The disordered stretch occupies residues 1–28 (MSAICQVTGRQPGYGKSVSHSHRRTSRR).

It belongs to the bacterial ribosomal protein bL28 family.

This Corynebacterium diphtheriae (strain ATCC 700971 / NCTC 13129 / Biotype gravis) protein is Large ribosomal subunit protein bL28.